The primary structure comprises 292 residues: 4-hydroxy-tetrahydrodipicolinate synthase (292 aa).

Thr-45 lines the pyruvate pocket. The active-site Proton donor/acceptor is Tyr-133. The active-site Schiff-base intermediate with substrate is the Lys-161. Ile-203 provides a ligand contact to pyruvate.

It belongs to the DapA family. Homodimer.

It is found in the cytoplasm. It catalyses the reaction L-aspartate 4-semialdehyde + pyruvate = (2S,4S)-4-hydroxy-2,3,4,5-tetrahydrodipicolinate + H2O + H(+). It participates in amino-acid biosynthesis; L-lysine biosynthesis via DAP pathway; (S)-tetrahydrodipicolinate from L-aspartate: step 3/4. In terms of biological role, catalyzes the condensation of (S)-aspartate-beta-semialdehyde [(S)-ASA] and pyruvate to 4-hydroxy-tetrahydrodipicolinate (HTPA). The protein is 4-hydroxy-tetrahydrodipicolinate synthase of Ectopseudomonas mendocina (strain ymp) (Pseudomonas mendocina).